The chain runs to 300 residues: 33 kDa chaperonin (300 aa).

2 disulfide bridges follow: Cys235/Cys237 and Cys269/Cys272.

It belongs to the HSP33 family. In terms of processing, under oxidizing conditions two disulfide bonds are formed involving the reactive cysteines. Under reducing conditions zinc is bound to the reactive cysteines and the protein is inactive.

Its subcellular location is the cytoplasm. Functionally, redox regulated molecular chaperone. Protects both thermally unfolding and oxidatively damaged proteins from irreversible aggregation. Plays an important role in the bacterial defense system toward oxidative stress. The sequence is that of 33 kDa chaperonin from Pseudomonas syringae pv. tomato (strain ATCC BAA-871 / DC3000).